A 467-amino-acid chain; its full sequence is UDP-N-acetylmuramate--L-alanine ligase (467 aa).

114-120 is an ATP binding site; that stretch reads GTHGKTT.

It belongs to the MurCDEF family.

Its subcellular location is the cytoplasm. It carries out the reaction UDP-N-acetyl-alpha-D-muramate + L-alanine + ATP = UDP-N-acetyl-alpha-D-muramoyl-L-alanine + ADP + phosphate + H(+). It functions in the pathway cell wall biogenesis; peptidoglycan biosynthesis. Functionally, cell wall formation. This is UDP-N-acetylmuramate--L-alanine ligase from Rhodopseudomonas palustris (strain BisA53).